Consider the following 183-residue polypeptide: uncharacterized protein (183 aa).

The next 4 membrane-spanning stretches (helical) occupy residues 13-35 (KALL…LTYS), 60-82 (LLIL…KLRF), 117-139 (FEPV…YAIF), and 149-171 (LLFY…LYLS).

The protein localises to the cell membrane. This is an uncharacterized protein from Archaeoglobus fulgidus (strain ATCC 49558 / DSM 4304 / JCM 9628 / NBRC 100126 / VC-16).